We begin with the raw amino-acid sequence, 343 residues long: Membrane progestin receptor delta (343 aa).

At 1 to 49 (MLSLKMPQLLRVHQVPRVFWEEGIMSGYRCPTSSALDCVLSSFQMTNET) the chain is on the cytoplasmic side. A helical transmembrane segment spans residues 50–70 (VNIWTHFLPTWYFLWRLLALG). The Extracellular segment spans residues 71-79 (SPGFRADPY). A helical membrane pass occupies residues 80–100 (HLPLLVFLLPACLYPFASCCA). The Cytoplasmic segment spans residues 101–112 (HTFSSMSPRARH). Residues 113-133 (ICYFLDYGALSLYSLGCAFPY) traverse the membrane as a helical segment. The Extracellular portion of the chain corresponds to 134-146 (AAYSMPASWLHSR). A helical transmembrane segment spans residues 147 to 167 (LHQLFVPAAALNSFLCTGLSC). Residues 168-216 (YSRFPELEYPGFSKALRTAAFAYPFLFDNLPLFYRLRLCWGGAHSCGRD) lie on the Cytoplasmic side of the membrane. The chain crosses the membrane as a helical span at residues 217–237 (ALSSNHGYHLLCALLSGFLFA). Over 238-257 (ARLPERLAPGRFDYIGHSHQ) the chain is Extracellular. A helical membrane pass occupies residues 258-278 (LFHICAVLGTHFQLEAVLADM). At 279–291 (GSRRAWLAVQEPT) the chain is on the cytoplasmic side. A helical membrane pass occupies residues 292-312 (LGLGATVATLSLAVIGNLFII). Residues 313 to 343 (AAFTASLLRMPGPCPLLQGSPLEEGLQAKQQ) lie on the Extracellular side of the membrane.

This sequence belongs to the ADIPOR family. As to quaternary structure, homodimer.

It localises to the cell membrane. Its function is as follows. Plasma membrane progesterone (P4) receptor coupled to G proteins. Seems to act through a G(s) mediated pathway. Involved in neurosteroid inhibition of apoptosis. May be involved in regulating rapid P4 signaling in the nervous system. Also binds dehydroepiandrosterone (DHEA), pregnanolone, pregnenolone and allopregnanolone. This is Membrane progestin receptor delta from Mus musculus (Mouse).